We begin with the raw amino-acid sequence, 289 residues long: MISAKEIRSKIASVKSTQKITKAMEMVAASKMRKSQESMSATRPYAEMIRKVIGHLALGNLEYKHPYLQERKVKRVGYLVVSTDRGLCGGLNVNLFKKILTDMHDQSEKNVASELSLIGSKGVAFFNSIGAKIVAQVTGISDKPSLPDIIGPVQAMLKAYDEGRLDKLYIANNRFINTMSQQPQITQLLPLLPMDEGQIGVTKKSWDYLYEPEPKVLLDTLLRRYIESQVYQGVVENISSEQAARMVAMKAATDNGGNLIDELQLIYNKARQASITQELTEIVGGASAL.

This sequence belongs to the ATPase gamma chain family. As to quaternary structure, F-type ATPases have 2 components, CF(1) - the catalytic core - and CF(0) - the membrane proton channel. CF(1) has five subunits: alpha(3), beta(3), gamma(1), delta(1), epsilon(1). CF(0) has three main subunits: a, b and c.

Its subcellular location is the cell membrane. In terms of biological role, produces ATP from ADP in the presence of a proton gradient across the membrane. The gamma chain is believed to be important in regulating ATPase activity and the flow of protons through the CF(0) complex. The protein is ATP synthase gamma chain of Hamiltonella defensa subsp. Acyrthosiphon pisum (strain 5AT).